We begin with the raw amino-acid sequence, 114 residues long: Iron-sulfur cluster insertion protein ErpA (114 aa).

3 residues coordinate iron-sulfur cluster: Cys-42, Cys-106, and Cys-108.

The protein belongs to the HesB/IscA family. In terms of assembly, homodimer. Iron-sulfur cluster is required as a cofactor.

In terms of biological role, required for insertion of 4Fe-4S clusters for at least IspG. The sequence is that of Iron-sulfur cluster insertion protein ErpA from Wigglesworthia glossinidia brevipalpis.